Here is a 504-residue protein sequence, read N- to C-terminus: MVEQQQQEEDIWGQILRESSNKNNYFEKRDVAILGDPTSGKSLLLSKFDTVSNVESLKSIALSYTFSDIYEDDTSEDPVGRINYWSLEGEASQNDLLKFSLNKENIKNCMVIITLDFSQPWNLVESLKKWLGILEEHIKSIFKDDKNGFKNLQDKLSIKWHEYEEPTTTAATTTTTTTSNNIENNTNKTSPTTDKIQTNNVQKKKKKKVNISSAEDASVLPPLSENILINNLGVPILVACCKSDSVVMLEKDFDYKDELFDYIQQYLRRICLQYGAGLIYTSARKEINCGVTLEYIENILFGFELKSKTQLIEKDQIFVPAGWDTLAKIQVDFENQKVCKDTDEPYENIVKKPSIIKRREQTQTNSIICDDDQDFLGKIKSQLDNDDQSSINSPSTPSPLSQSSNNNNSNNNINNTSTPSINTPLQPTDKPLSDIKSSNNPVAASPSAERAALANFFTSLISKDKTSSRKDLKSSLASPPTTSVSSNAREDAKKELDKLKQQKK.

Position 35 to 42 (35 to 42 (GDPTSGKS)) interacts with ATP. 3 stretches are compositionally biased toward low complexity: residues 167–189 (TTTA…TNKT), 392–425 (NSPS…NTPL), and 437–446 (SSNNPVAASP). Disordered regions lie at residues 167–195 (TTTA…TTDK), 383–446 (LDND…AASP), and 464–504 (DKTS…QQKK). The span at 464–473 (DKTSSRKDLK) shows a compositional bias: basic and acidic residues. Polar residues predominate over residues 475–487 (SLASPPTTSVSSN). Over residues 488–504 (AREDAKKELDKLKQQKK) the composition is skewed to basic and acidic residues.

The protein belongs to the dynein light intermediate chain family. As to quaternary structure, homodimer. The cytoplasmic dynein 1 complex consists of two catalytic heavy chains (HCs) and a number of non-catalytic subunits presented by intermediate chains (ICs), light intermediate chains (LICs) and light chains (LCs).

It is found in the cytoplasm. The protein localises to the cytoskeleton. Acts as one of several non-catalytic accessory components of the cytoplasmic dynein 1 complex that are thought to be involved in linking dynein to cargos and to adapter proteins that regulate dynein function. Cytoplasmic dynein 1 acts as a motor for the intracellular retrograde motility of vesicles and organelles along microtubules. May play a role in binding dynein to membranous organelles or chromosomes. This chain is Cytoplasmic dynein 1 light intermediate chain 1 (dync1li1), found in Dictyostelium discoideum (Social amoeba).